We begin with the raw amino-acid sequence, 174 residues long: RNA pyrophosphohydrolase (174 aa).

Residues 6 to 149 (GYRPNVGIIL…KRDVYLGALK (144 aa)) form the Nudix hydrolase domain. Positions 38-59 (GGIKPGESPETAMYRELYEEVG) match the Nudix box motif.

This sequence belongs to the Nudix hydrolase family. RppH subfamily. A divalent metal cation serves as cofactor.

Accelerates the degradation of transcripts by removing pyrophosphate from the 5'-end of triphosphorylated RNA, leading to a more labile monophosphorylated state that can stimulate subsequent ribonuclease cleavage. This is RNA pyrophosphohydrolase from Neisseria meningitidis serogroup C (strain 053442).